The sequence spans 719 residues: Putative ankyrin repeat protein RBE_0319 (719 aa).

ANK repeat units follow at residues 377–406, 408–438, 442–472, 476–506, 510–540, 544–572, 576–605, 609–639, and 642–672; these read VAEE…EISS, TLIK…NINE, NGGT…EVNK, YGFT…EINQ, YQTT…KFNE, LGYT…DINQ, DGYT…NVNE, HGLT…EVSE, and QYGT…NLNK.

In Rickettsia bellii (strain RML369-C), this protein is Putative ankyrin repeat protein RBE_0319.